Here is a 577-residue protein sequence, read N- to C-terminus: Protein downstream neighbor of son homolog (577 aa).

Disordered regions lie at residues 1–67 (MAEL…KRRN) and 328–382 (FTQP…LEEM). The segment covering 362 to 375 (ETDEVSDESDEDES) has biased composition (acidic residues).

The protein belongs to the DONSON family. In terms of assembly, component of the replisome complex.

Its subcellular location is the nucleus. Its function is as follows. Replisome component that maintains genome stability by protecting stalled or damaged replication forks. After the induction of replication stress, required for the stabilization of stalled replication forks, the efficient activation of the intra-S-phase and G/2M cell-cycle checkpoints and the maintenance of genome stability. The protein is Protein downstream neighbor of son homolog of Xenopus tropicalis (Western clawed frog).